The sequence spans 147 residues: MVHLADDEKAAVSALWHKVHVEEFGGEALGRLLVVYPWTSRFFESFGDLSSADAVFSNAKVKAHGKKVLTSFGEGLKHLDDLKGTYAHLSELHCDKLHVDPENFKLLGNVLVIVLARHFGKEFTPQLQAAYQKVTTGVSTALAHKYH.

Val-2 is subject to N-acetylvaline. Residues 3 to 147 form the Globin domain; that stretch reads HLADDEKAAV…VSTALAHKYH (145 aa). At Ser-45 the chain carries Phosphoserine. At Lys-60 the chain carries N6-acetyllysine. His-64 contacts heme b. Residue Lys-83 is modified to N6-acetyllysine. His-93 is a binding site for heme b. The residue at position 94 (Cys-94) is an S-nitrosocysteine. Residue Lys-145 is modified to N6-acetyllysine.

The protein belongs to the globin family. As to quaternary structure, heterotetramer of two alpha chains and two beta chains. Red blood cells.

Involved in oxygen transport from the lung to the various peripheral tissues. The polypeptide is Hemoglobin subunit beta (HBB) (Bradypus tridactylus (Pale-throated three-toed sloth)).